The sequence spans 333 residues: Chlorophyllide reductase 35.5 kDa chain (333 aa).

A disordered region spans residues 1–22 (MTDAPNLKGFDARLREEAAEEP). ATP is bound by residues 45–50 (GSGKSF) and Lys-74. Ser-49 contacts Mg(2+). Residues Cys-130 and Cys-165 each contribute to the [4Fe-4S] cluster site. 219–220 (NK) contacts ATP.

It belongs to the NifH/BchL/ChlL family. Homodimer. Chlorophyllide reductase is composed of three subunits; BchX, BchY and BchZ. It depends on [4Fe-4S] cluster as a cofactor.

It catalyses the reaction 3-deacetyl-3-vinylbacteriochlorophyllide a + 2 oxidized [2Fe-2S]-[ferredoxin] + ADP + phosphate = chlorophyllide a + 2 reduced [2Fe-2S]-[ferredoxin] + ATP + H2O + H(+). The catalysed reaction is bacteriochlorophyllide a + 2 oxidized [2Fe-2S]-[ferredoxin] + ADP + phosphate = 3-acetyl-3-devinylchlorophyllide a + 2 reduced [2Fe-2S]-[ferredoxin] + ATP + H2O + H(+). The enzyme catalyses 3-deacetyl-3-(1-hydroxyethyl)bacteriochlorophyllide a + 2 oxidized [2Fe-2S]-[ferredoxin] + ADP + phosphate = 3-devinyl-3-(1-hydroxyethyl)chlorophyllide a + 2 reduced [2Fe-2S]-[ferredoxin] + ATP + H2O + H(+). The protein operates within porphyrin-containing compound metabolism; bacteriochlorophyll biosynthesis. In terms of biological role, converts chlorophylls (Chl) into bacteriochlorophylls (BChl) by reducing ring B of the tetrapyrrole. In Rhodobacter capsulatus (strain ATCC BAA-309 / NBRC 16581 / SB1003), this protein is Chlorophyllide reductase 35.5 kDa chain (bchX).